The primary structure comprises 579 residues: Suppressor of cytokine signaling 7 (579 aa).

Disordered regions lie at residues M1 to E25, P89 to S270, and Q295 to S315. Composition is skewed to pro residues over residues P89–A99, P155–F165, and Q185–L196. Residues A124–R492 are mediates interaction with SORBS3. A compositionally biased stretch (basic residues) spans G206–R217. Pro residues predominate over residues P301–R311. The 110-residue stretch at W398–V507 folds into the SH2 domain. In terms of domain architecture, SOCS box spans Q502–Y552.

In terms of assembly, substrate-recognition component of the ECS(SOCS7) complex, composed of SOCS7, CUL5, ELOB, ELOC and RNF7/RBX2. Interacts, via the third proline-rich region, with the second SH3 domain of the adapter protein NCK1. Also interacts with GRB2, INSR, PLCG1, SORBS3/vinexin, and phosphorylated STAT3 and STAT5. Interacts with SEPT6. Interacts with phosphorylated IRS4 and PIK3R1. As to expression, widely expressed with higher expression in brain and testis where it is expressed by spermatocytes and early spermatids. Also significantly expressed in spleen, skeletal muscle and kidney.

It localises to the cytoplasm. It is found in the nucleus. Its subcellular location is the cell membrane. It functions in the pathway protein modification; protein ubiquitination. Substrate-recognition component of a cullin-5-RING E3 ubiquitin-protein ligase complex (ECS complex, also named CRL5 complex), which mediates the ubiquitination and subsequent proteasomal degradation of target proteins, such as DAB1 and IRS1. Specifically recognizes and binds phosphorylated proteins via its SH2 domain, promoting their ubiquitination. The ECS(SOCS7) complex acts as a key regulator of reelin signaling by mediating ubiquitination and degradation of phosphorylated DAB1 in the cortical plate of the developing cerebral cortex, thereby regulating neuron positioning during cortex development. Functions in insulin signaling and glucose homeostasis through IRS1 ubiquitination and subsequent proteasomal degradation. Also inhibits prolactin, growth hormone and leptin signaling by preventing STAT3 and STAT5 activation, sequestering them in the cytoplasm and reducing their binding to DNA. This is Suppressor of cytokine signaling 7 from Mus musculus (Mouse).